We begin with the raw amino-acid sequence, 144 residues long: Large ribosomal subunit protein uL15 (144 aa).

The interval M1 to E51 is disordered. The segment covering R21–H35 has biased composition (gly residues).

Belongs to the universal ribosomal protein uL15 family. In terms of assembly, part of the 50S ribosomal subunit.

Binds to the 23S rRNA. The sequence is that of Large ribosomal subunit protein uL15 from Vesicomyosocius okutanii subsp. Calyptogena okutanii (strain HA).